The chain runs to 480 residues: 2-phosphoxylose phosphatase 1 (480 aa).

Residues 1–6 (MLHRNR) are Cytoplasmic-facing. The helical; Signal-anchor for type II membrane protein transmembrane segment at 7–27 (FLVLLALAGLLAFLSLSLQFF) threads the bilayer. Residues 28–480 (HLIPVSATKN…YYDACHGEGA (453 aa)) are Lumenal-facing. His97 acts as the Nucleophile in catalysis. 3 N-linked (GlcNAc...) asparagine glycosylation sites follow: Asn194, Asn305, and Asn354. The Proton donor role is filled by Asp379.

Belongs to the histidine acid phosphatase family. Interacts with B3GAT3; the interaction increases the 2-phosphoxylose phosphatase activity of PXYLP1 during completion of linkage region formation in a B3GAT3-mediated manner.

It localises to the golgi apparatus membrane. It catalyses the reaction 3-O-[beta-D-GlcA-(1-&gt;3)-beta-D-Gal-(1-&gt;3)-beta-D-Gal-(1-&gt;4)-beta-D-2-O-P-Xyl]-L-seryl-[protein] + H2O = 3-O-(beta-D-GlcA-(1-&gt;3)-beta-D-Gal-(1-&gt;3)-beta-D-Gal-(1-&gt;4)-beta-D-Xyl)-L-seryl-[protein] + phosphate. Functionally, responsible for the 2-O-dephosphorylation of xylose in the glycosaminoglycan-protein linkage region of proteoglycans thereby regulating the amount of mature glycosaminoglycan (GAG) chains. Sulfated glycosaminoglycans (GAGs), including heparan sulfate and chondroitin sulfate, are synthesized on the so-called common GAG-protein linkage region (GlcUAbeta1-3Galbeta1-3Galbeta1-4Xylbeta1-O-Ser) of core proteins, which is formed by the stepwise addition of monosaccharide residues by the respective specific glycosyltransferases. Xylose 2-O-dephosphorylation during completion of linkage region formation is a prerequisite for the initiation and efficient elongation of the repeating disaccharide region of GAG chains. The protein is 2-phosphoxylose phosphatase 1 of Mus musculus (Mouse).